Reading from the N-terminus, the 159-residue chain is Ribosome maturation factor RimP (159 aa).

Belongs to the RimP family.

It is found in the cytoplasm. Functionally, required for maturation of 30S ribosomal subunits. This chain is Ribosome maturation factor RimP, found in Streptococcus agalactiae serotype III (strain NEM316).